A 215-amino-acid polypeptide reads, in one-letter code: Cytokinin riboside 5'-monophosphate phosphoribohydrolase LOG4 (215 aa).

Residues Glu-84, Arg-102–Lys-103, Gly-119–Glu-125, and Thr-131 each bind substrate.

Belongs to the LOG family. As to expression, expressed in roots and shoots. Detected in root procambium, lateral root primordia, vascular tissues of cotyledons, leaves and stems, shoot apical meristem, axillary buds, young inflorescences, fruit abscission zones and basal part of ovules.

The protein localises to the cytoplasm. Its subcellular location is the nucleus. The catalysed reaction is N(6)-(dimethylallyl)adenosine 5'-phosphate + H2O = N(6)-dimethylallyladenine + D-ribose 5-phosphate. The enzyme catalyses 9-ribosyl-trans-zeatin 5'-phosphate + H2O = trans-zeatin + D-ribose 5-phosphate. Cytokinin-activating enzyme working in the direct activation pathway. Phosphoribohydrolase that converts inactive cytokinin nucleotides to the biologically active free-base forms. In Arabidopsis thaliana (Mouse-ear cress), this protein is Cytokinin riboside 5'-monophosphate phosphoribohydrolase LOG4 (LOG4).